We begin with the raw amino-acid sequence, 147 residues long: HTH-type transcriptional regulator MgrA (147 aa).

The HTH marR-type domain maps to 8–139 (KEQLCFSLYN…LNRLLGKVIH (132 aa)). The segment at residues 55–78 (VKKVVTELALDTGTVSPLLKRMEQ) is a DNA-binding region (H-T-H motif).

The protein resides in the cytoplasm. Regulatory protein involved in autolytic activity, multidrug resistance and virulence. Controls autolysis by inactivating LytM, LytN (autolysins) and SarV (autolysis activator) and activating ArlRS, LrgAB and LytSR (autolysis inhibitors). Acts as a dual regulator for resistance to multiple drugs by inactivating NorB and tet38 and activating NorA. Positively controls the expression of virulence accessory gene regulator (agr) to promote alpha-hemolysin (hla) transcription and down-regulates staphylococcal accessory regulator (sarS), leading to repression of surface protein A (spa). Binds directly to hla promoter to augment its activation. Binds to sarS promoter to down-regulate spa expression. This Staphylococcus aureus (strain NCTC 8325 / PS 47) protein is HTH-type transcriptional regulator MgrA (mgrA).